We begin with the raw amino-acid sequence, 129 residues long: ATP synthase epsilon chain (129 aa).

The protein belongs to the ATPase epsilon chain family. In terms of assembly, F-type ATPases have 2 components, CF(1) - the catalytic core - and CF(0) - the membrane proton channel. CF(1) has five subunits: alpha(3), beta(3), gamma(1), delta(1), epsilon(1). CF(0) has three main subunits: a, b and c.

The protein localises to the cell inner membrane. In terms of biological role, produces ATP from ADP in the presence of a proton gradient across the membrane. The protein is ATP synthase epsilon chain of Campylobacter jejuni subsp. doylei (strain ATCC BAA-1458 / RM4099 / 269.97).